Consider the following 183-residue polypeptide: Protein SHI RELATED SEQUENCE 6 (183 aa).

Positions 41, 44, 52, 57, 61, and 68 each coordinate Zn(2+). The segment at residues 41-68 (CRDCGNRAKKECLFERCRTCCKSRGYNC) is a DNA-binding region (zn(2)-C6 fungal-type; degenerate). Residues 79-88 (SSATRSSSSP) are compositionally biased toward low complexity. Residues 79-121 (SSATRSSSSPSERKKKLKIDKQSSPNVSLLPTTTSRQERGFRE) form a disordered region. A compositionally biased stretch (polar residues) spans 100–113 (QSSPNVSLLPTTTS). A Required for homo- and heterodimerization motif is present at residues 157-160 (ISGH).

This sequence belongs to the SHI protein family.

Its subcellular location is the nucleus. Its function is as follows. Transcription activator that binds DNA on 5'-ACTCTAC-3' and promotes auxin homeostasis-regulating gene expression (e.g. YUC genes), as well as genes affecting stamen development, cell expansion and timing of flowering. Synergistically with other SHI-related proteins, regulates gynoecium, stamen and leaf development in a dose-dependent manner, controlling apical-basal patterning. Promotes style and stigma formation, and influences vascular development during gynoecium development. May also have a role in the formation and/or maintenance of the shoot apical meristem (SAM). The protein is Protein SHI RELATED SEQUENCE 6 (SRS6) of Arabidopsis thaliana (Mouse-ear cress).